The following is an 847-amino-acid chain: Guanine nucleotide exchange factor VAV3 (847 aa).

The 119-residue stretch at 1-119 (MEPWKQCAQW…ETLSRLSRTP (119 aa)) folds into the Calponin-homology (CH) domain. Tyrosine 141 is modified (phosphotyrosine). The region spanning 192 to 371 (IRSCCLAEIK…KDLAQYVNEV (180 aa)) is the DH domain. One can recognise a PH domain in the interval 400-502 (RPQGDGEIRI…WLEQFEMALS (103 aa)). The Phorbol-ester/DAG-type zinc finger occupies 513 to 562 (FHDFKMHTFTRVTSCKVCQMLLRGTFYQGYLCFKCGARAHKECLGRVDNC). The sufficient for interaction with ROS1 stretch occupies residues 560–847 (DNCGRVNSGE…FPSTYVEEDE (288 aa)). Residues 592-660 (PGLPKMQVIR…PSDAVKPCPC (69 aa)) enclose the SH3 1 domain. The SH2 domain occupies 672–766 (WYAGAMERLQ…TLDTTLQFPY (95 aa)). In terms of domain architecture, SH3 2 spans 788-847 (KVLGIAIARYDFCARDMRELSLLKGDVVKIYTKMSANGWWRGEVNGRVGWFPSTYVEEDE).

As to quaternary structure, interacts with the PH domain of SH2B2. Interacts (via SH2 domains) with the phosphorylated form of EPHA2. Interacts with ROS1; constitutive interaction that mediates VAV3 phosphorylation. Phosphorylated. Phosphorylation can be mediated by ROS1. In osteoclasts, undergoes tyrosine phosphorylation in response to CSF1. As to expression, isoform 1 and isoform 3 are widely expressed; both are expressed at very low levels in skeletal muscle. In keratinocytes, isoform 1 is less abundant than isoform 3. Isoform 3 is detected at very low levels, if any, in adrenal gland, bone marrow, spleen, fetal brain and spinal cord; in these tissues, isoform 1 is readily detectable.

Exchange factor for GTP-binding proteins RhoA, RhoG and, to a lesser extent, Rac1. Binds physically to the nucleotide-free states of those GTPases. Plays an important role in angiogenesis. Its recruitment by phosphorylated EPHA2 is critical for EFNA1-induced RAC1 GTPase activation and vascular endothelial cell migration and assembly. May be important for integrin-mediated signaling, at least in some cell types. In osteoclasts, along with SYK tyrosine kinase, required for signaling through integrin alpha-v/beta-1 (ITAGV-ITGB1), a crucial event for osteoclast proper cytoskeleton organization and function. This signaling pathway involves RAC1, but not RHO, activation. Necessary for proper wound healing. In the course of wound healing, required for the phagocytotic cup formation preceding macrophage phagocytosis of apoptotic neutrophils. Responsible for integrin beta-2 (ITGB2)-mediated macrophage adhesion and, to a lesser extent, contributes to beta-3 (ITGB3)-mediated adhesion. Does not affect integrin beta-1 (ITGB1)-mediated adhesion. This chain is Guanine nucleotide exchange factor VAV3 (VAV3), found in Homo sapiens (Human).